Reading from the N-terminus, the 228-residue chain is HTH-type transcriptional regulator ArcR (228 aa).

22 to 141 (SYINIPVGVL…VKLFSLLSET (120 aa)) serves as a coordination point for a nucleoside 3',5'-cyclic phosphate. The HTH crp-type domain occupies 155 to 228 (KLAKERVTKI…SKNWLVSKDL (74 aa)). A DNA-binding region (H-T-H motif) is located at residues 188–207 (IQLLSDMAGISRETTSHIIN).

Its subcellular location is the cytoplasm. Its function is as follows. Positively regulates the expression of the arcABDCR operon under anaerobic conditions, thus playing an essential role in arginine catabolism. May also control the expression of genes encoding proteins which are involved in anaerobic metabolism. Can bind cyclic AMP. The protein is HTH-type transcriptional regulator ArcR (arcR) of Staphylococcus epidermidis (strain ATCC 12228 / FDA PCI 1200).